The chain runs to 333 residues: Fructose-1,6-bisphosphatase class 1 1 (333 aa).

E81, D100, L102, and D103 together coordinate Mg(2+). Residues 103–106 and N191 contribute to the substrate site; that span reads DGSS. Residue E263 coordinates Mg(2+).

The protein belongs to the FBPase class 1 family. As to quaternary structure, homotetramer. It depends on Mg(2+) as a cofactor.

The protein resides in the cytoplasm. The enzyme catalyses beta-D-fructose 1,6-bisphosphate + H2O = beta-D-fructose 6-phosphate + phosphate. The protein operates within carbohydrate biosynthesis; Calvin cycle. The protein is Fructose-1,6-bisphosphatase class 1 1 of Cereibacter sphaeroides (strain ATCC 17023 / DSM 158 / JCM 6121 / CCUG 31486 / LMG 2827 / NBRC 12203 / NCIMB 8253 / ATH 2.4.1.) (Rhodobacter sphaeroides).